Reading from the N-terminus, the 282-residue chain is Pantothenate synthetase (282 aa).

Residue 30 to 37 (MGYLHEGH) participates in ATP binding. Catalysis depends on H37, which acts as the Proton donor. Position 61 (Q61) interacts with (R)-pantoate. A beta-alanine-binding site is contributed by Q61. 147–150 (GMKD) lines the ATP pocket. Q153 lines the (R)-pantoate pocket. Residues V176 and 184-187 (KSSR) contribute to the ATP site.

It belongs to the pantothenate synthetase family. Homodimer.

The protein localises to the cytoplasm. The enzyme catalyses (R)-pantoate + beta-alanine + ATP = (R)-pantothenate + AMP + diphosphate + H(+). It functions in the pathway cofactor biosynthesis; (R)-pantothenate biosynthesis; (R)-pantothenate from (R)-pantoate and beta-alanine: step 1/1. Functionally, catalyzes the condensation of pantoate with beta-alanine in an ATP-dependent reaction via a pantoyl-adenylate intermediate. In Bacillus mycoides (strain KBAB4) (Bacillus weihenstephanensis), this protein is Pantothenate synthetase.